A 1429-amino-acid chain; its full sequence is Alpha-agarase (1429 aa).

The first 26 residues, 1–26 (MFKTKRSLLNSSIAISFAVLGVQAQA), serve as a signal peptide directing secretion. 2 consecutive CBM6 domains span residues 29 to 161 (LELQ…FRLT) and 211 to 345 (FVIQ…LTFT). Disordered regions lie at residues 349 to 400 (SDGG…DGVS) and 474 to 495 (NTPAGTQVDASGCETDNGGEPG). Residues 369–378 (SSDSCPNTPT) show a composition bias toward polar residues. Residues 490-638 (NGGEPGDSYY…GGTNFVHPSN (149 aa)) enclose the PA14 domain. Residues 662 to 793 (IYIQLEDFDE…QWSGDLVRLA (132 aa)) form the CBM6 3 domain.

This sequence belongs to the glycosyl hydrolase 96 family. As to quaternary structure, homodimer. It depends on Ca(2+) as a cofactor.

It carries out the reaction Endohydrolysis of 1,3-alpha-L-galactosidic linkages in agarose, yielding agarotetraose as the major product.. Functionally, alpha-agarase. Does not hydrolyze agarotetraose, agarohexaose, kappa-carrageenan, iota-carrageenan or lambda-carrageenan. The polypeptide is Alpha-agarase (Alteromonas agarilytica).